A 142-amino-acid chain; its full sequence is Hemoglobin subunit alpha-1/2 (142 aa).

Residues 2 to 142 (VLSPADKTNI…VSTVLTSKYR (141 aa)) form the Globin domain. Ser-4 is subject to Phosphoserine. The residue at position 8 (Lys-8) is an N6-succinyllysine. At Thr-9 the chain carries Phosphothreonine. At Lys-12 the chain carries N6-succinyllysine. Lys-17 bears the N6-acetyllysine; alternate mark. Lys-17 bears the N6-succinyllysine; alternate mark. Tyr-25 carries the phosphotyrosine modification. N6-succinyllysine is present on Lys-41. O2 is bound at residue His-59. His-88 is a binding site for heme b. Ser-103 bears the Phosphoserine mark. At Thr-109 the chain carries Phosphothreonine. Residue Ser-125 is modified to Phosphoserine. A phosphothreonine mark is found at Thr-135 and Thr-138. Ser-139 carries the post-translational modification Phosphoserine.

The protein belongs to the globin family. Heterotetramer of two alpha chains and two beta chains. In terms of tissue distribution, red blood cells.

In terms of biological role, involved in oxygen transport from the lung to the various peripheral tissues. This Oryctolagus cuniculus (Rabbit) protein is Hemoglobin subunit alpha-1/2.